Here is a 535-residue protein sequence, read N- to C-terminus: Dimethylaniline monooxygenase [N-oxide-forming] 2 (535 aa).

Ala-2 carries the N-acetylalanine modification. FAD is bound by residues 9–13, Glu-32, 40–41, and 61–62; these read GAGVS, LW, and NT. NADP(+) is bound by residues 60-61 and 195-198; these read TN and SASD. Lys-492 participates in a covalent cross-link: Glycyl lysine isopeptide (Lys-Gly) (interchain with G-Cter in SUMO). The chain crosses the membrane as a helical span at residues 510 to 530; that stretch reads LSASFLMKILALVAVFVAFFS.

It belongs to the FMO family. The cofactor is FAD. Requires Mg(2+) as cofactor. As to expression, lung.

It is found in the microsome membrane. It localises to the endoplasmic reticulum membrane. Functionally, catalyzes the oxidative metabolism of numerous xenobiotics, including mainly therapeutic drugs and insecticides that contain a soft nucleophile, most commonly nitrogen and sulfur and participates to their bioactivation. In Cavia porcellus (Guinea pig), this protein is Dimethylaniline monooxygenase [N-oxide-forming] 2.